Reading from the N-terminus, the 120-residue chain is NAD(P)H-quinone oxidoreductase subunit 3, chloroplastic (120 aa).

The next 3 membrane-spanning stretches (helical) occupy residues 9–29 (IFWA…WISA), 64–84 (MFAL…PWAM), and 88–108 (VLGI…VVGL).

This sequence belongs to the complex I subunit 3 family. In terms of assembly, NDH is composed of at least 16 different subunits, 5 of which are encoded in the nucleus.

The protein localises to the plastid. Its subcellular location is the chloroplast thylakoid membrane. The catalysed reaction is a plastoquinone + NADH + (n+1) H(+)(in) = a plastoquinol + NAD(+) + n H(+)(out). It catalyses the reaction a plastoquinone + NADPH + (n+1) H(+)(in) = a plastoquinol + NADP(+) + n H(+)(out). In terms of biological role, NDH shuttles electrons from NAD(P)H:plastoquinone, via FMN and iron-sulfur (Fe-S) centers, to quinones in the photosynthetic chain and possibly in a chloroplast respiratory chain. The immediate electron acceptor for the enzyme in this species is believed to be plastoquinone. Couples the redox reaction to proton translocation, and thus conserves the redox energy in a proton gradient. In Oryza nivara (Indian wild rice), this protein is NAD(P)H-quinone oxidoreductase subunit 3, chloroplastic.